A 94-amino-acid polypeptide reads, in one-letter code: Large ribosomal subunit protein bL25 (94 aa).

It belongs to the bacterial ribosomal protein bL25 family. In terms of assembly, part of the 50S ribosomal subunit; part of the 5S rRNA/L5/L18/L25 subcomplex. Contacts the 5S rRNA. Binds to the 5S rRNA independently of L5 and L18.

In terms of biological role, this is one of the proteins that binds to the 5S RNA in the ribosome where it forms part of the central protuberance. This is Large ribosomal subunit protein bL25 from Enterobacter sp. (strain 638).